Consider the following 307-residue polypeptide: 1-aminocyclopropane-1-carboxylate oxidase 5 (307 aa).

The stretch at 106–134 forms a coiled coil; the sequence is SNIKETMGEYREEVRKLASKMMEVMDENL. The Fe2OG dioxygenase domain maps to 152–256; the sequence is GEETAFFGTK…RRSIASFYNP (105 aa). Fe cation-binding residues include His180, Asp182, and His237. Arg247 serves as a coordination point for 2-oxoglutarate.

The protein belongs to the iron/ascorbate-dependent oxidoreductase family. Fe(2+) serves as cofactor.

It carries out the reaction 1-aminocyclopropane-1-carboxylate + L-ascorbate + O2 = ethene + L-dehydroascorbate + hydrogen cyanide + CO2 + 2 H2O. The protein operates within alkene biosynthesis; ethylene biosynthesis via S-adenosyl-L-methionine; ethylene from S-adenosyl-L-methionine: step 2/2. Its function is as follows. Enzyme involved in the ethylene biosynthesis. The sequence is that of 1-aminocyclopropane-1-carboxylate oxidase 5 from Arabidopsis thaliana (Mouse-ear cress).